The sequence spans 355 residues: MRVADFTFELPESLIAHYPQAERSGCRLLSLNGSDGALTHGVFTDLLHKLNPGDLLVFNNTRVIPARIFGRKASGGKIEVLVERMLDDTRVLAHVRSSKAPKPGSDLLLGDDESVQATMLARHDTLFEIEFNDARPVLDILNSIGHMPLPPYIDRPDEDADRELYQTVYSQKPGAVAAPTAGLHFDEPLLVALREKGIETAFVTLHVGAGTFQPVRVDTIEDHIMHAEYAEVPQDVVDAVLACKARGNRVIAVGTTSVRSLESAAQAAENTLIAPFFGDTKIFIYPGYHYQVIDALVTNFHLPESTLIMLVSAFAGYKHTMRAYQQAVAEQYRFFSYGDAMFITRNPQAFAEIPG.

Belongs to the QueA family. In terms of assembly, monomer.

It localises to the cytoplasm. It carries out the reaction 7-aminomethyl-7-carbaguanosine(34) in tRNA + S-adenosyl-L-methionine = epoxyqueuosine(34) in tRNA + adenine + L-methionine + 2 H(+). Its pathway is tRNA modification; tRNA-queuosine biosynthesis. Functionally, transfers and isomerizes the ribose moiety from AdoMet to the 7-aminomethyl group of 7-deazaguanine (preQ1-tRNA) to give epoxyqueuosine (oQ-tRNA). This chain is S-adenosylmethionine:tRNA ribosyltransferase-isomerase, found in Erwinia tasmaniensis (strain DSM 17950 / CFBP 7177 / CIP 109463 / NCPPB 4357 / Et1/99).